The following is a 118-amino-acid chain: Ribulose bisphosphate carboxylase small subunit 2 (118 aa).

This sequence belongs to the RuBisCO small chain family. As to quaternary structure, heterohexadecamer of 8 large and 8 small subunits.

Its function is as follows. RuBisCO catalyzes two reactions: the carboxylation of D-ribulose 1,5-bisphosphate, the primary event in carbon dioxide fixation, as well as the oxidative fragmentation of the pentose substrate. Both reactions occur simultaneously and in competition at the same active site. Although the small subunit is not catalytic it is essential for maximal activity. The protein is Ribulose bisphosphate carboxylase small subunit 2 of Acidithiobacillus ferrooxidans (Thiobacillus ferrooxidans).